Consider the following 108-residue polypeptide: ATP synthase subunit H, mitochondrial (108 aa).

Residues 1–19 (MFTLRAASRRAFSTSIARR) constitute a mitochondrion transit peptide. Disordered regions lie at residues 40-60 (AKDA…KPPV) and 75-108 (APVD…GVAV). The segment covering 47 to 60 (VKPWSAPSAPKPPV) has biased composition (low complexity). Over residues 81–92 (GQTNSKSASPQA) the composition is skewed to polar residues. A compositionally biased stretch (acidic residues) spans 93-108 (NDEDWLAFEEEEGVAV).

As to quaternary structure, F-type ATP synthases have 2 components, the catalytic core F(1) and the membrane-embedded component F(0), linked together by a central stalk and a peripheral stalk. The central stalk, also called rotor shaft, is often seen as part of F(1). The peripheral stalk is seen as part of F(0). F(0) contains the membrane channel next to the rotor. F-type ATP synthases form dimers but each monomer functions independently in ATP generation. The dimer consists of 17 different polypeptides: ATP1 (subunit alpha, 3 molecules per monomer, part of F(1)), ATP2 (subunit beta, 3 copies per monomer, part of F(1)), ATP3 (subunit gamma, part of the central stalk), ATP4 (subunit b, part of the peripheral stalk), ATP5/OSCP (subunit 5/OSCP, part of the peripheral stalk), ATP6 (subunit a, part of the peripheral stalk), ATP7 (subunit d, part of the peripheral stalk), ATP8 (subunit 8, part of the peripheral stalk), OLI1 (subunit c, part of the rotor, 10 molecules per monomer), ATP14 (subunit H, part of the peripheral stalk), ATP15 (subunit epsilon, part of the central stalk), ATP16 (subunit delta, part of the central stalk), ATP17 (subunit f, part of the peripheral stalk), ATP18 (subunit i/j, part of the peripheral stalk), ATP19 (subunit k, dimer-specific, at interface between monomers), ATP20 (subunit g, at interface between monomers), TIM11 (subunit e, at interface between monomers).

Its subcellular location is the mitochondrion inner membrane. Its function is as follows. Mitochondrial membrane ATP synthase (F(1)F(0) ATP synthase or Complex V) produces ATP from ADP in the presence of a proton gradient across the membrane which is generated by electron transport complexes of the respiratory chain. F-type ATP synthases consist of two structural domains, F(1) - containing the extramembraneous catalytic core, and F(0) - containing the membrane proton channel, linked together by a central stalk and a peripheral stalk. During catalysis, ATP synthesis in the catalytic domain of F(1) is coupled via a rotary mechanism of the central stalk subunits to proton translocation. Part of the peripheral stalk. The chain is ATP synthase subunit H, mitochondrial from Yarrowia lipolytica (strain CLIB 122 / E 150) (Yeast).